The chain runs to 202 residues: Nascent polypeptide-associated complex subunit alpha (202 aa).

The segment covering 1–19 (MADPRVEEIVEEETPKQTV) has biased composition (basic and acidic residues). Residues 1–41 (MADPRVEEIVEEETPKQTVEDAGSDSESEAGEANIPAGAAV) are disordered. Residues 45–110 (SRNEKKARKA…AKIEDLNSQA (66 aa)) enclose the NAC-A/B domain. Residues 117–127 (QLAAAEAAAGE) show a composition bias toward low complexity. Positions 117 to 165 (QLAAAEAAAGEHAGHDHEHDLGTKVPEAETKKEEEEDDGEPVDESGLEA) are disordered. A compositionally biased stretch (basic and acidic residues) spans 128-149 (HAGHDHEHDLGTKVPEAETKKE). Acidic residues predominate over residues 150–162 (EEEDDGEPVDESG). The 40-residue stretch at 163-202 (LEAKDIELVMAQANVSRKKAVKALRENDNDIVNSIMALSI) folds into the UBA domain.

Belongs to the NAC-alpha family. As to quaternary structure, part of the nascent polypeptide-associated complex (NAC), consisting of egd2 and egd1. NAC associates with ribosomes via egd1.

It localises to the cytoplasm. The protein resides in the nucleus. Component of the nascent polypeptide-associated complex (NAC), a dynamic component of the ribosomal exit tunnel, protecting the emerging polypeptides from interaction with other cytoplasmic proteins to ensure appropriate nascent protein targeting. The NAC complex also promotes mitochondrial protein import by enhancing productive ribosome interactions with the outer mitochondrial membrane and blocks the inappropriate interaction of ribosomes translating non-secretory nascent polypeptides with translocation sites in the membrane of the endoplasmic reticulum. Egd2 may also be involved in transcription regulation. The chain is Nascent polypeptide-associated complex subunit alpha (egd2) from Aspergillus oryzae (strain ATCC 42149 / RIB 40) (Yellow koji mold).